We begin with the raw amino-acid sequence, 941 residues long: Isoleucine--tRNA ligase (941 aa).

The short motif at 58–68 is the 'HIGH' region element; sequence PYANGDIHIGH. Glu-562 provides a ligand contact to L-isoleucyl-5'-AMP. The 'KMSKS' region signature appears at 603–607; that stretch reads KMSKS. An ATP-binding site is contributed by Lys-606. Zn(2+) is bound by residues Cys-904, Cys-907, Cys-924, and Cys-927.

Belongs to the class-I aminoacyl-tRNA synthetase family. IleS type 1 subfamily. As to quaternary structure, monomer. Requires Zn(2+) as cofactor.

It localises to the cytoplasm. It carries out the reaction tRNA(Ile) + L-isoleucine + ATP = L-isoleucyl-tRNA(Ile) + AMP + diphosphate. Catalyzes the attachment of isoleucine to tRNA(Ile). As IleRS can inadvertently accommodate and process structurally similar amino acids such as valine, to avoid such errors it has two additional distinct tRNA(Ile)-dependent editing activities. One activity is designated as 'pretransfer' editing and involves the hydrolysis of activated Val-AMP. The other activity is designated 'posttransfer' editing and involves deacylation of mischarged Val-tRNA(Ile). The chain is Isoleucine--tRNA ligase from Alkalilimnicola ehrlichii (strain ATCC BAA-1101 / DSM 17681 / MLHE-1).